The sequence spans 527 residues: Zinc finger C2HC domain-containing protein 1C (527 aa).

Disordered stretches follow at residues 18–105 (HNKT…GQGK) and 145–170 (VHRK…LPDS). The span at 50 to 61 (NSFQSKLWSNTE) shows a compositional bias: polar residues. Residues 71-85 (RPKRNVCTKARRHSC) are compositionally biased toward basic residues. A compositionally biased stretch (low complexity) spans 93-102 (QQGSGNNAQG). Residues 207–254 (TQIQRLEAAGESLQKEIRRKEILLQEKLKKTEEGLRRMQKEKKQAIFQ) are a coiled coil. Disordered stretches follow at residues 264–316 (LPRR…LSDY) and 352–379 (LGST…EPEL). Positions 286–298 (FRSEVFSRNRGED) are enriched in basic and acidic residues. A compositionally biased stretch (polar residues) spans 301–312 (CDQAQENPSPRQ). The segment covering 358–374 (ESSRSGTPGSSGSSSST) has biased composition (low complexity). 2 consecutive C2HC/C3H-type zinc fingers follow at residues 378 to 407 (ELAK…MQGS) and 489 to 518 (DYVQ…IKNR). Residues Cys382, Cys385, His397, Cys401, Cys493, Cys496, His508, and Cys512 each coordinate Zn(2+). The disordered stretch occupies residues 507-527 (RHIPKCKTIKNRPPPPRRHDS).

The protein belongs to the ZC2HC1 family. It depends on Zn(2+) as a cofactor.

The protein is Zinc finger C2HC domain-containing protein 1C (Zc2hc1c) of Mus musculus (Mouse).